The sequence spans 488 residues: MTKNNEVGWNLDNSYATLPQSFYTEIPPTPVSSPELVKLNHSLAISLGFNPEELKKEAEIAIFAGNALPEGAHPLAQAYAGHQFGHFNMLGDGRALLIGEQITPSGKRFDIQLKGSGPTPYSRRGDGRAALGPMLREYIISEAMYALDIPTTRSLAVVTTGEPTYRETKLPGAILTRVASSHIRVGTFQYAAARGSIEDLQSLADYTIKRHYPEIEAHENRYTALLQEVIKKQASLIAKWQLVGFIHGVMNTDNITISGETIDYGPCAFMDNYDQGTVFSSIDTQGRYAYGNQPYMAAWDLARLAESLIPILHEDEEEALKIAQDEISKFSVQYEKQWFIGMKKKLGLFSNEEQDQSLIEQLFKMMEKYKADYTNTFRSLTLDTLENTPLFDSPEFKEWYKLWQSRLEKQEESKENAYEMMKNNNPSIIPRNHRVEEALEAAVTNGDYSVMEKLLEALANPYAYSTDQEEYCVPPAPTNRPYRTFCGT.

The ATP site is built by Gly-91, Gly-93, Arg-94, Lys-114, Asp-126, Gly-127, Arg-177, and Arg-184. Catalysis depends on Asp-253, which acts as the Proton acceptor. Mg(2+)-binding residues include Asn-254 and Asp-263. An ATP-binding site is contributed by Asp-263.

The protein belongs to the SELO family. Requires Mg(2+) as cofactor. Mn(2+) serves as cofactor.

The catalysed reaction is L-seryl-[protein] + ATP = 3-O-(5'-adenylyl)-L-seryl-[protein] + diphosphate. It carries out the reaction L-threonyl-[protein] + ATP = 3-O-(5'-adenylyl)-L-threonyl-[protein] + diphosphate. It catalyses the reaction L-tyrosyl-[protein] + ATP = O-(5'-adenylyl)-L-tyrosyl-[protein] + diphosphate. The enzyme catalyses L-histidyl-[protein] + UTP = N(tele)-(5'-uridylyl)-L-histidyl-[protein] + diphosphate. The catalysed reaction is L-seryl-[protein] + UTP = O-(5'-uridylyl)-L-seryl-[protein] + diphosphate. It carries out the reaction L-tyrosyl-[protein] + UTP = O-(5'-uridylyl)-L-tyrosyl-[protein] + diphosphate. Functionally, nucleotidyltransferase involved in the post-translational modification of proteins. It can catalyze the addition of adenosine monophosphate (AMP) or uridine monophosphate (UMP) to a protein, resulting in modifications known as AMPylation and UMPylation. The polypeptide is Protein nucleotidyltransferase YdiU (Bacillus thuringiensis (strain Al Hakam)).